Consider the following 253-residue polypeptide: Probable transcriptional regulatory protein RPR_05505 (253 aa).

This sequence belongs to the TACO1 family.

It is found in the cytoplasm. The polypeptide is Probable transcriptional regulatory protein RPR_05505 (Rickettsia peacockii (strain Rustic)).